Here is a 313-residue protein sequence, read N- to C-terminus: Formimidoylglutamase (313 aa).

Mn(2+) is bound by residues His-130, Asp-155, His-157, Asp-159, Asp-241, and Asp-243.

It belongs to the arginase family. Requires Mn(2+) as cofactor.

It catalyses the reaction N-formimidoyl-L-glutamate + H2O = formamide + L-glutamate. The protein operates within amino-acid degradation; L-histidine degradation into L-glutamate; L-glutamate from N-formimidoyl-L-glutamate (hydrolase route): step 1/1. In terms of biological role, catalyzes the conversion of N-formimidoyl-L-glutamate to L-glutamate and formamide. This is Formimidoylglutamase from Salmonella schwarzengrund (strain CVM19633).